A 183-amino-acid polypeptide reads, in one-letter code: Protein jagunal homolog 1 (183 aa).

The Cytoplasmic segment spans residues 1-39; the sequence is MASRAGPRAAGTDGSDFQHRERVAMHYQMSVTLKYEIKK. Residue S3 is modified to Phosphoserine. Residues 40–60 traverse the membrane as a helical segment; that stretch reads LIYVHLVIWLLLVAKMSVGHL. Over 61–71 the chain is Lumenal; sequence RLLSHDQVAMP. Residues 72–92 traverse the membrane as a helical segment; that stretch reads YQWEYPYLLSVVPSLLGLLSF. Over 93–96 the chain is Cytoplasmic; sequence PRNN. A helical transmembrane segment spans residues 97–117; the sequence is ISYLVLSMISMGLFSIAPLIY. Over 118 to 137 the chain is Lumenal; it reads GSMEMFPAAQQLYRHGKAYR. Residues 138 to 158 traverse the membrane as a helical segment; the sequence is FLFGFSAVSVMYLVLVLAVQV. Residues 159–183 lie on the Cytoplasmic side of the membrane; the sequence is HAWQLYYSKKLLDSWFTSTQEKKRK.

It belongs to the jagunal family. Interacts with COPA, COPB2 and COPG2.

The protein resides in the endoplasmic reticulum membrane. In terms of biological role, endoplasmic reticulum transmembrane protein involved in vesicle-mediated transport, which is required for neutrophil function. Required for vesicle-mediated transport; it is however unclear whether it is involved in early secretory pathway or intracellular protein transport. Acts as a regulator of neutrophil function, probably via its role in vesicle-mediated transport: required for defense against fungal pathogens and for granulocyte colony-stimulating factor (GM-CSF) signaling pathway; possibly by regulating glycosylation and/or targeting of proteins contributing to the viability and migration of neutrophils. This Bos taurus (Bovine) protein is Protein jagunal homolog 1 (JAGN1).